A 205-amino-acid polypeptide reads, in one-letter code: MSASPSPSITGLLLAGGRATRMDGADKGLQLLDGTPLALHVLRRLSPQVDETLISANRNADRYAELGAPFDARIVADETADFPGPLAGLLAGMRAARAPLVACAPCDTPYLPADLIARLHAALDAQQADIAMAVTVDAQHARSPQPTFALLRTSLADDLAAALAAGERKVRAWYARHKTVEVEFRDERAFYNANSWHELAALARR.

GTP-binding positions include 14 to 16 (LAG), Lys-27, Asp-77, and Asp-107. Asp-107 provides a ligand contact to Mg(2+).

This sequence belongs to the MobA family. In terms of assembly, monomer. Mg(2+) serves as cofactor.

The protein localises to the cytoplasm. It catalyses the reaction Mo-molybdopterin + GTP + H(+) = Mo-molybdopterin guanine dinucleotide + diphosphate. Functionally, transfers a GMP moiety from GTP to Mo-molybdopterin (Mo-MPT) cofactor (Moco or molybdenum cofactor) to form Mo-molybdopterin guanine dinucleotide (Mo-MGD) cofactor. This chain is Molybdenum cofactor guanylyltransferase, found in Burkholderia ambifaria (strain MC40-6).